We begin with the raw amino-acid sequence, 688 residues long: Translation initiation factor IF-2 (688 aa).

A compositionally biased stretch (basic and acidic residues) spans 50–62; sequence LLSGKEKSEKTKE. The disordered stretch occupies residues 50-95; that stretch reads LLSGKEKSEKTKEEDDEIETTAKNPIKESINNKKSNKRDDKNEKVN. Over residues 72–82 the composition is skewed to low complexity; it reads KNPIKESINNK. Positions 86–95 are enriched in basic and acidic residues; it reads KRDDKNEKVN. In terms of domain architecture, tr-type G spans 187 to 354; sequence KRSPIITVMG…MILLSSEILE (168 aa). Residues 196–203 are G1; it reads GHVDHGKT. 196–203 contacts GTP; the sequence is GHVDHGKT. The interval 221–225 is G2; the sequence is GITQH. The interval 242-245 is G3; it reads DTPG. GTP-binding positions include 242–246 and 296–299; these read DTPGH and NKID. A G4 region spans residues 296–299; sequence NKID. A G5 region spans residues 332 to 334; it reads SAH.

Belongs to the TRAFAC class translation factor GTPase superfamily. Classic translation factor GTPase family. IF-2 subfamily.

It is found in the cytoplasm. One of the essential components for the initiation of protein synthesis. Protects formylmethionyl-tRNA from spontaneous hydrolysis and promotes its binding to the 30S ribosomal subunits. Also involved in the hydrolysis of GTP during the formation of the 70S ribosomal complex. In Clostridium botulinum (strain Langeland / NCTC 10281 / Type F), this protein is Translation initiation factor IF-2.